We begin with the raw amino-acid sequence, 309 residues long: Elongation factor Ts (309 aa).

The interval 98-101 (TDFV) is involved in Mg(2+) ion dislocation from EF-Tu.

Belongs to the EF-Ts family.

Its subcellular location is the cytoplasm. Its function is as follows. Associates with the EF-Tu.GDP complex and induces the exchange of GDP to GTP. It remains bound to the aminoacyl-tRNA.EF-Tu.GTP complex up to the GTP hydrolysis stage on the ribosome. In Orientia tsutsugamushi (strain Boryong) (Rickettsia tsutsugamushi), this protein is Elongation factor Ts.